The following is a 128-amino-acid chain: 3-aminoacrylate deaminase RutC (128 aa).

Belongs to the RutC family.

The catalysed reaction is (Z)-3-aminoacrylate + H2O + H(+) = 3-oxopropanoate + NH4(+). Its function is as follows. Involved in pyrimidine catabolism. Catalyzes the deamination of 3-aminoacrylate to malonic semialdehyde, a reaction that can also occur spontaneously. RutC may facilitate the reaction and modulate the metabolic fitness, rather than catalyzing essential functions. In Agrobacterium fabrum (strain C58 / ATCC 33970) (Agrobacterium tumefaciens (strain C58)), this protein is 3-aminoacrylate deaminase RutC.